Consider the following 37-residue polypeptide: Delta/kappa-conotoxin Mo3964 (37 aa).

Intrachain disulfides connect Cys4-Cys12, Cys11-Cys27, and Cys21-Cys34.

As to expression, expressed by the venom duct.

It localises to the secreted. This toxin reduces the outward currents that are due to the opening of voltage-gated potassium channels in DRG neurons. In addition, leftward shift in the presence of this toxin is observed in averaged normalized conductance-voltage plot of outward sodium currents (Nav1.2/SCN2A). This Conus monile (Necklace cone) protein is Delta/kappa-conotoxin Mo3964.